A 630-amino-acid polypeptide reads, in one-letter code: PR domain zinc finger protein 5 (630 aa).

The 117-residue stretch at 8 to 124 (DRFSLKSSRV…TDTELLIGYL (117 aa)) folds into the SET domain. Residues 167-190 (YACPQCESSFTSEDILAEHLQTLH) form a C2H2-type 1 zinc finger. The C2H2-type 2; atypical zinc-finger motif lies at 199–221 (FKCKNCGKKFPVKQALQRHVLQC). The C2H2-type 3; atypical zinc finger occupies 234-256 (FQCSVCNSSFSSASSFEQHQETC). C2H2-type zinc fingers lie at residues 262-287 (FVCK…ENVH), 295-317 (LICS…RKIH), 320-342 (FDCQ…MITH), 348-370 (YNCE…KVIH), 376-398 (YKCK…KKTH), 404-426 (FQCE…LLIH), 432-455 (FKCH…QVVH), 461-483 (YRCE…KKTH), 489-511 (KICP…IRSH), 517-539 (YQCP…IRTH), 545-567 (YKCS…KRTH), 573-595 (FQCD…KMTH), and 602-625 (AECQ…DNIH).

The protein belongs to the class V-like SAM-binding methyltransferase superfamily. Interacts with EHMT2/G9A, GFI1 and HDAC1. In terms of tissue distribution, widely expressed with highest levels in colon and ovary. Tends to be silenced in breast, colorectal, gastric and liver cancer tissues.

Its subcellular location is the nucleus. Functionally, sequence-specific DNA-binding transcription factor. Represses transcription at least in part by recruitment of the histone methyltransferase EHMT2/G9A and histone deacetylases such as HDAC1. Regulates hematopoiesis-associated protein-coding and microRNA (miRNA) genes. May regulate the expression of proteins involved in extracellular matrix development and maintenance, including fibrillar collagens, such as COL4A1 and COL11A1, connective tissue components, such as HAPLN1, and molecules regulating cell migration and adhesion, including EDIL3 and TGFB2. May cause G2/M arrest and apoptosis in cancer cells. This is PR domain zinc finger protein 5 (PRDM5) from Homo sapiens (Human).